A 148-amino-acid polypeptide reads, in one-letter code: Cathelicidin-1 (148 aa).

Positions 1–17 (MLSCWVLLLALLGGACA) are cleaved as a signal peptide. A propeptide spanning residues 18–122 (LPAPLGYSQA…TCVDSMADPV (105 aa)) is cleaved from the precursor. 2 disulfides stabilise this stretch: C75/C86 and C97/C114.

This sequence belongs to the cathelicidin family. Detected in gizzard, liver, small intestine, large intestine, cloaca, bursa of Fabricius, gall bladder, lung, trachea, kidney, testis and bone marrow.

It is found in the secreted. In terms of biological role, binds bacterial lipopolysaccharide (LPS). Has potent antimicrobial activity against Gram-positive and Gram-negative bacteria (in vitro). Has hemolytic activity (in vitro). May play a role in the innate immune response. The chain is Cathelicidin-1 (CATHL1) from Gallus gallus (Chicken).